Reading from the N-terminus, the 127-residue chain is Large ribosomal subunit protein bL20 (127 aa).

It belongs to the bacterial ribosomal protein bL20 family.

Binds directly to 23S ribosomal RNA and is necessary for the in vitro assembly process of the 50S ribosomal subunit. It is not involved in the protein synthesizing functions of that subunit. This is Large ribosomal subunit protein bL20 from Streptomyces avermitilis (strain ATCC 31267 / DSM 46492 / JCM 5070 / NBRC 14893 / NCIMB 12804 / NRRL 8165 / MA-4680).